A 1011-amino-acid polypeptide reads, in one-letter code: Translation initiation factor IF-2 (1011 aa).

The span at 49–77 shows a compositional bias: basic and acidic residues; the sequence is YIHEHGTEESPRRRSAGEDEFKPKIDLSK. Disordered stretches follow at residues 49 to 152 and 187 to 407; these read YIHE…RFIT and AAPA…LSLS. Over residues 93-104 the composition is skewed to pro residues; the sequence is APPPPPPPPPRP. Positions 105–115 are enriched in low complexity; that stretch reads AVKAPSPVSQE. Pro residues predominate over residues 116 to 126; that stretch reads PRPPAVPPAPQ. Low complexity-rich tracts occupy residues 187–212 and 228–242; these read AAPA…KAPV and TAKP…AATP. Composition is skewed to pro residues over residues 243-252 and 276-290; these read APTPGRPLPG and SAPP…PPPQ. A compositionally biased stretch (gly residues) spans 316–329; that stretch reads GPGGGSGGPGGFQR. Residues 361–380 are compositionally biased toward low complexity; that stretch reads LAPPGAPANKPAGRPAPARR. One can recognise a tr-type G domain in the interval 502-678; the sequence is VRPPVVTIMG…CLVADLGDLK (177 aa). The tract at residues 511-518 is G1; the sequence is GHVDHGKT. Position 511–518 (511–518) interacts with GTP; sequence GHVDHGKT. The G2 stretch occupies residues 536 to 540; it reads GITQH. The tract at residues 564–567 is G3; it reads DTPG. Residues 564-568 and 618-621 each bind GTP; these read DTPGH and NKID. The G4 stretch occupies residues 618–621; sequence NKID. The interval 654–656 is G5; the sequence is SAK.

This sequence belongs to the TRAFAC class translation factor GTPase superfamily. Classic translation factor GTPase family. IF-2 subfamily.

Its subcellular location is the cytoplasm. One of the essential components for the initiation of protein synthesis. Protects formylmethionyl-tRNA from spontaneous hydrolysis and promotes its binding to the 30S ribosomal subunits. Also involved in the hydrolysis of GTP during the formation of the 70S ribosomal complex. The polypeptide is Translation initiation factor IF-2 (Koribacter versatilis (strain Ellin345)).